The sequence spans 194 residues: Imidazoleglycerol-phosphate dehydratase (194 aa).

The protein belongs to the imidazoleglycerol-phosphate dehydratase family.

The protein localises to the cytoplasm. The enzyme catalyses D-erythro-1-(imidazol-4-yl)glycerol 3-phosphate = 3-(imidazol-4-yl)-2-oxopropyl phosphate + H2O. It participates in amino-acid biosynthesis; L-histidine biosynthesis; L-histidine from 5-phospho-alpha-D-ribose 1-diphosphate: step 6/9. The polypeptide is Imidazoleglycerol-phosphate dehydratase (Chloroherpeton thalassium (strain ATCC 35110 / GB-78)).